We begin with the raw amino-acid sequence, 707 residues long: Kinesin-like protein KIN-13B (707 aa).

Residues 152-477 (KIKVVVRKRP…LRYADRVKSL (326 aa)) enclose the Kinesin motor domain. Position 243–250 (243–250 (GQTGSGKT)) interacts with ATP. The stretch at 619–656 (EHLNELLQEEEDLVSAHRKQVEETLDMIKEEMNLLVEA) forms a coiled coil.

This sequence belongs to the TRAFAC class myosin-kinesin ATPase superfamily. Kinesin family. KIN-13 subfamily.

In Oryza sativa subsp. japonica (Rice), this protein is Kinesin-like protein KIN-13B.